The following is a 286-amino-acid chain: 3-methyl-2-oxobutanoate hydroxymethyltransferase (286 aa).

Residues D51 and D90 each coordinate Mg(2+). 3-methyl-2-oxobutanoate contacts are provided by residues 51-52, D90, and K120; that span reads DS. Position 122 (E122) interacts with Mg(2+). The active-site Proton acceptor is E189. Residues 263–286 form a disordered region; sequence TFPGPSHVFSGSKASSDLNGGDES.

The protein belongs to the PanB family. Homodecamer; pentamer of dimers. It depends on Mg(2+) as a cofactor.

Its subcellular location is the cytoplasm. It catalyses the reaction 3-methyl-2-oxobutanoate + (6R)-5,10-methylene-5,6,7,8-tetrahydrofolate + H2O = 2-dehydropantoate + (6S)-5,6,7,8-tetrahydrofolate. The protein operates within cofactor biosynthesis; (R)-pantothenate biosynthesis; (R)-pantoate from 3-methyl-2-oxobutanoate: step 1/2. In terms of biological role, catalyzes the reversible reaction in which hydroxymethyl group from 5,10-methylenetetrahydrofolate is transferred onto alpha-ketoisovalerate to form ketopantoate. This Mesorhizobium japonicum (strain LMG 29417 / CECT 9101 / MAFF 303099) (Mesorhizobium loti (strain MAFF 303099)) protein is 3-methyl-2-oxobutanoate hydroxymethyltransferase.